The chain runs to 854 residues: DNA mismatch repair protein MutS (854 aa).

615–622 (GPNMGGKS) is a binding site for ATP.

This sequence belongs to the DNA mismatch repair MutS family.

This protein is involved in the repair of mismatches in DNA. It is possible that it carries out the mismatch recognition step. This protein has a weak ATPase activity. In Aliivibrio fischeri (strain ATCC 700601 / ES114) (Vibrio fischeri), this protein is DNA mismatch repair protein MutS.